The chain runs to 94 residues: Small ubiquitin-related modifier 3 (94 aa).

A Glycyl lysine isopeptide (Lys-Gly) (interchain with G-Cter in SUMO) cross-link involves residue lysine 11. The Ubiquitin-like domain maps to 15–92 (DHINLKVAGQ…IDVFQQQTGG (78 aa)). Residue glycine 92 forms a Glycyl lysine isopeptide (Gly-Lys) (interchain with K-? in acceptor proteins) linkage. Positions 93–94 (LC) are excised as a propeptide.

This sequence belongs to the ubiquitin family. SUMO subfamily. Interacts with SAE2 and UBE2I. Covalently attached to a number of proteins. In terms of processing, polymeric chains can be formed through Lys-11 cross-linking. Cleavage of precursor form by a sentrin-specific protease is necessary for function.

It localises to the cytoplasm. Its subcellular location is the nucleus. The protein localises to the PML body. In terms of biological role, ubiquitin-like protein which can be covalently attached to target lysines either as a monomer or as a lysine-linked polymer. Does not seem to be involved in protein degradation and may function as an antagonist of ubiquitin in the degradation process. Plays a role in a number of cellular processes such as nuclear transport, DNA replication and repair, mitosis and signal transduction. Covalent attachment to its substrates requires prior activation by the E1 complex SAE1-SAE2 and linkage to the E2 enzyme UBE2I. This Gallus gallus (Chicken) protein is Small ubiquitin-related modifier 3.